The primary structure comprises 206 residues: High frequency lysogenization protein HflD homolog (206 aa).

The protein belongs to the HflD family.

It is found in the cytoplasm. Its subcellular location is the cell inner membrane. In Pseudomonas paraeruginosa (strain DSM 24068 / PA7) (Pseudomonas aeruginosa (strain PA7)), this protein is High frequency lysogenization protein HflD homolog.